The following is a 245-amino-acid chain: Collagen triple helix repeat-containing protein 1 (245 aa).

The N-terminal stretch at 1 to 32 (MHPQGRAASPQLLLGLFLVLLLLLQLSAPSSA) is a signal peptide. The Collagen-like domain maps to 59–92 (QGPAGVPGRDGSPGANGIPGTPGIPGRDGFKGEK). The segment at 64–87 (VPGRDGSPGANGIPGTPGIPGRDG) is disordered. The N-linked (GlcNAc...) asparagine glycan is linked to asparagine 188.

In terms of processing, N-glycosylated. In terms of tissue distribution, expressed after injury in the carotid arteries (at protein level). Expressed in brain, lung, and after injury in fibroblasts of the adventitia and the neointima of the arteries.

The protein localises to the secreted. Its subcellular location is the extracellular space. It localises to the extracellular matrix. Its overexpression in smooth muscle cell lines increases their migratory ability and inhibits collagen type I expression. May act as a negative regulator of collagen matrix deposition. The protein is Collagen triple helix repeat-containing protein 1 (Cthrc1) of Rattus norvegicus (Rat).